The following is a 422-amino-acid chain: UDP-N-acetylglucosamine 1-carboxyvinyltransferase 2 (422 aa).

Residue 22–23 (KN) participates in phosphoenolpyruvate binding. Residue Arg-93 coordinates UDP-N-acetyl-alpha-D-glucosamine. Cys-117 (proton donor) is an active-site residue. Cys-117 is subject to 2-(S-cysteinyl)pyruvic acid O-phosphothioketal. Residues 122 to 126 (RPVDL), Asp-308, and Ile-330 contribute to the UDP-N-acetyl-alpha-D-glucosamine site.

Belongs to the EPSP synthase family. MurA subfamily.

Its subcellular location is the cytoplasm. The catalysed reaction is phosphoenolpyruvate + UDP-N-acetyl-alpha-D-glucosamine = UDP-N-acetyl-3-O-(1-carboxyvinyl)-alpha-D-glucosamine + phosphate. Its pathway is cell wall biogenesis; peptidoglycan biosynthesis. Functionally, cell wall formation. Adds enolpyruvyl to UDP-N-acetylglucosamine. This Legionella pneumophila (strain Lens) protein is UDP-N-acetylglucosamine 1-carboxyvinyltransferase 2.